The primary structure comprises 145 residues: Mitochondrial import receptor subunit TOM20 homolog (145 aa).

Over 1–6 (MVGRNS) the chain is Mitochondrial intermembrane. The helical transmembrane segment at 7–24 (AIAAGVCGALFIGYCIYF) threads the bilayer. At 25 to 145 (DRKRRSDPNF…AQSLAEDDVE (121 aa)) the chain is on the cytoplasmic side. Residues K35, K56, K61, and K68 each participate in a glycyl lysine isopeptide (Lys-Gly) (interchain with G-Cter in ubiquitin) cross-link. Residues S135 and S138 each carry the phosphoserine modification.

The protein belongs to the Tom20 family. Forms part of the preprotein translocase complex of the outer mitochondrial membrane (TOM complex) which consists of at least 7 different proteins (TOMM5, TOMM6, TOMM7, TOMM20, TOMM22, TOMM40 and TOMM70). Interacts with TOM22. Interacts with APEX1. Interacts with TBC1D21. Upon mitochondrial depolarization, interacts with PINK1; the interaction is required for PINK1-TOM-TIM23 supercomplex formation which is critical for PINK1 stabilization at the outer mitochondrial membrane, kinase activation and downstream mitophagy. In terms of processing, ubiquitinated by PRKN during mitophagy, leading to its degradation and enhancement of mitophagy. Deubiquitinated by USP30. Expressed in brain, kidney, stomach, colon, jejunum, ileum, testis, ovary and oviduct (at protein level). In the brain, expressed in neural cells of the cerebrum and cerebellum (at protein level). In the kidney, expressed in the proximal to distal tubule in the cortex and the outer and inner zones of the medulla (at protein level). In the stomach, expressed in the basal layer of stratified squamous epithelia in the forestomach and in the gastric pit and fundic gland of the glandular stomach (at protein level). Expressed in epithelial cells of the jejunum, ileum, and colon (at protein level). In the testis, expressed by spermatocytes and spermatogonia (at protein level). In the ovaries, expressed by follicular epithelial cells and corpus luteum cells (at protein level). In the oviduct, expressed in the epithelia of the isthmus and the ciliated cells of the ampulla (at protein level). Expressed in the sperm midpiece (at protein level).

It localises to the mitochondrion outer membrane. In terms of biological role, central component of the receptor complex responsible for the recognition and translocation of cytosolically synthesized mitochondrial preproteins. Together with TOM22 functions as the transit peptide receptor at the surface of the mitochondrion outer membrane and facilitates the movement of preproteins into the TOM40 translocation pore. Required for the translocation across the mitochondrial outer membrane of cytochrome P450 monooxygenases. This Mus musculus (Mouse) protein is Mitochondrial import receptor subunit TOM20 homolog (Tomm20).